The chain runs to 332 residues: Glyceraldehyde-3-phosphate dehydrogenase 1 (332 aa).

NAD(+)-binding residues include arginine 11, isoleucine 12, aspartate 33, and threonine 120. Residues 149-151 (SCT), threonine 180, 209-210 (TG), and arginine 232 each bind D-glyceraldehyde 3-phosphate. The Nucleophile role is filled by cysteine 150. Asparagine 314 and tyrosine 318 together coordinate NAD(+).

The protein belongs to the glyceraldehyde-3-phosphate dehydrogenase family. As to quaternary structure, homotetramer.

The protein resides in the cytoplasm. It carries out the reaction D-glyceraldehyde 3-phosphate + phosphate + NAD(+) = (2R)-3-phospho-glyceroyl phosphate + NADH + H(+). The catalysed reaction is NADH + H2O = (6R)-NADHX. The enzyme catalyses NADH + H2O = (6S)-NADHX. It catalyses the reaction NADPH + H2O = (6R)-NADPHX. It carries out the reaction NADPH + H2O = (6S)-NADPHX. It participates in carbohydrate degradation; glycolysis; pyruvate from D-glyceraldehyde 3-phosphate: step 1/5. In terms of biological role, glyceraldehyde-3-phosphate dehydrogenase (GAPDH) involved in glycolysis and gluconeogenesis. Catalyzes the reaction of glyceraldehyde-3-phosphate to 1,3 bis-phosphoglycerate. The contribution of the TDH1, TDH2, and TDH3 to the total glyceraldehyde-3-phosphate dehydrogenase activity is 10-15, 25-30, and 50-60%, respectively. May be involved in a process other than glycolysis because it is synthesized by cells in stationary phase. Functionally, as a side activity, catalyzes the hydration of the nicotinamide ring of NADH or NADPH at the C6 position to give the corresponding hydrates, NADHX and NADPHX, which exist as R and S epimers, that cannot act as electron donors or acceptors and inhibit several dehydrogenases, making them toxic. The chain is Glyceraldehyde-3-phosphate dehydrogenase 1 from Saccharomyces cerevisiae (strain ATCC 204508 / S288c) (Baker's yeast).